Here is a 195-residue protein sequence, read N- to C-terminus: dCTP deaminase, dUMP-forming (195 aa).

DCTP is bound by residues 105 to 110, Asp-123, 131 to 133, Gln-152, Tyr-166, Lys-173, and Gln-177; these read RSSLGR and TLE. Glu-133 functions as the Proton donor/acceptor in the catalytic mechanism. Positions 161–195 are disordered; the sequence is PADRPYGDERGSKYQDQDGPQASRIRGDREFGGTQ. The segment covering 165 to 176 has biased composition (basic and acidic residues); the sequence is PYGDERGSKYQD. Basic and acidic residues predominate over residues 185 to 195; sequence IRGDREFGGTQ.

It belongs to the dCTP deaminase family. In terms of assembly, homotrimer.

It catalyses the reaction dCTP + 2 H2O = dUMP + NH4(+) + diphosphate. The protein operates within pyrimidine metabolism; dUMP biosynthesis; dUMP from dCTP: step 1/1. Bifunctional enzyme that catalyzes both the deamination of dCTP to dUTP and the hydrolysis of dUTP to dUMP without releasing the toxic dUTP intermediate. The sequence is that of dCTP deaminase, dUMP-forming from Halobacterium salinarum (strain ATCC 700922 / JCM 11081 / NRC-1) (Halobacterium halobium).